A 477-amino-acid polypeptide reads, in one-letter code: Zinc finger C3HC-type protein 1-like (477 aa).

The C3HC-type zinc-finger motif lies at 95–149; sequence CAKYGWCNIECDMLKCSSCNAYLCASLQPILDFSKYKQRCVELQEALRKAHEKFC. The tract at residues 287 to 392 is disordered; sequence SLSAPGTPVS…SSSSDTSPRS (106 aa). A compositionally biased stretch (polar residues) spans 354–363; the sequence is SMGQGENTGL. A compositionally biased stretch (basic residues) spans 370-379; the sequence is SPHRRAKRPR. Over residues 382–392 the composition is skewed to low complexity; sequence SSSSSDTSPRS.

Phosphorylated. May also be weakly phosphorylated on Tyr residues.

The protein localises to the nucleus. The protein resides in the nucleus envelope. Its function is as follows. Required for proper positioning of a substantial amount of TPR at the nuclear basket (NB) through interaction with TPR. The chain is Zinc finger C3HC-type protein 1-like (zc3hc1) from Xenopus laevis (African clawed frog).